The sequence spans 130 residues: Cystatin (130 aa).

Residues Met1 to Ala19 form the signal peptide. Positions Gln67–Gly71 match the Secondary area of contact motif. Intrachain disulfides connect Cys85-Cys94 and Cys108-Cys128.

This sequence belongs to the cystatin family.

Its subcellular location is the secreted. In terms of biological role, cysteine proteinase inhibitor. The protein is Cystatin of Oncorhynchus mykiss (Rainbow trout).